We begin with the raw amino-acid sequence, 127 residues long: uncharacterized protein (127 aa).

This is an uncharacterized protein from Haemophilus influenzae (strain ATCC 51907 / DSM 11121 / KW20 / Rd).